The following is a 495-amino-acid chain: Glycerol kinase (495 aa).

Threonine 11 serves as a coordination point for ADP. Residues threonine 11, threonine 12, and serine 13 each coordinate ATP. Threonine 11 is a sn-glycerol 3-phosphate binding site. Arginine 15 is an ADP binding site. Residues arginine 81, glutamate 82, tyrosine 133, and aspartate 242 each contribute to the sn-glycerol 3-phosphate site. Arginine 81, glutamate 82, tyrosine 133, aspartate 242, and glutamine 243 together coordinate glycerol. ADP contacts are provided by threonine 264 and glycine 307. ATP-binding residues include threonine 264, glycine 307, glutamine 311, and glycine 408. Glycine 408 and asparagine 412 together coordinate ADP.

This sequence belongs to the FGGY kinase family.

The catalysed reaction is glycerol + ATP = sn-glycerol 3-phosphate + ADP + H(+). It functions in the pathway polyol metabolism; glycerol degradation via glycerol kinase pathway; sn-glycerol 3-phosphate from glycerol: step 1/1. Inhibited by fructose 1,6-bisphosphate (FBP). Key enzyme in the regulation of glycerol uptake and metabolism. Catalyzes the phosphorylation of glycerol to yield sn-glycerol 3-phosphate. In Acinetobacter baylyi (strain ATCC 33305 / BD413 / ADP1), this protein is Glycerol kinase.